The sequence spans 306 residues: Pantothenate kinase (306 aa).

91–98 serves as a coordination point for ATP; that stretch reads GSVAVGKS.

The protein belongs to the prokaryotic pantothenate kinase family.

It is found in the cytoplasm. The catalysed reaction is (R)-pantothenate + ATP = (R)-4'-phosphopantothenate + ADP + H(+). Its pathway is cofactor biosynthesis; coenzyme A biosynthesis; CoA from (R)-pantothenate: step 1/5. The sequence is that of Pantothenate kinase from Streptococcus pyogenes serotype M49 (strain NZ131).